The primary structure comprises 564 residues: Mitochondrial distribution and morphology protein 34-1 (564 aa).

In terms of domain architecture, SMP-LTD spans 1–195 (MAFKFNWSPL…LPAIIHRLSL (195 aa)). Polar residues-rich tracts occupy residues 297-322 (PDQN…SQTG) and 329-352 (DNAS…SSYG). Disordered stretches follow at residues 297 to 408 (PDQN…VTSA), 414 to 433 (HEQP…DQSL), and 452 to 473 (DLSS…PFNT). The span at 359 to 371 (RHSRAHARRRKKR) shows a compositional bias: basic residues. Over residues 383 to 394 (SDSASVSVSDES) the composition is skewed to low complexity. Polar residues predominate over residues 396-408 (YTESASAPSVTSA). The span at 452–466 (DLSSEIVRDRAEPSE) shows a compositional bias: basic and acidic residues.

This sequence belongs to the MDM34 family. In terms of assembly, component of the ER-mitochondria encounter structure (ERMES) or MDM complex, composed of mmm1, mdm10, mdm12 and mdm34.

The protein localises to the mitochondrion outer membrane. Its function is as follows. Component of the ERMES/MDM complex, which serves as a molecular tether to connect the endoplasmic reticulum (ER) and mitochondria. Components of this complex are involved in the control of mitochondrial shape and protein biogenesis, and function in nonvesicular lipid trafficking between the ER and mitochondria. Mdm34 is required for the interaction of the ER-resident membrane protein mmm1 and the outer mitochondrial membrane-resident beta-barrel protein mdm10. The sequence is that of Mitochondrial distribution and morphology protein 34-1 from Penicillium rubens (strain ATCC 28089 / DSM 1075 / NRRL 1951 / Wisconsin 54-1255) (Penicillium chrysogenum).